We begin with the raw amino-acid sequence, 133 residues long: Snaclec A9 (133 aa).

3 disulfides stabilise this stretch: C4/C15, C32/C131, and C106/C123. Residues 11–132 (YEGHCYKVFN…CGQPYRFTCE (122 aa)) form the C-type lectin domain.

Belongs to the snaclec family. As to quaternary structure, heterodimer; disulfide-linked. As to expression, expressed by the venom gland.

It localises to the secreted. Interferes with one step of hemostasis (modulation of platelet aggregation, or coagulation cascade, for example). This is Snaclec A9 from Macrovipera lebetinus (Levantine viper).